A 322-amino-acid polypeptide reads, in one-letter code: Phospho-N-acetylmuramoyl-pentapeptide-transferase (322 aa).

Transmembrane regions (helical) follow at residues 10-30 (YTAL…IPML), 51-71 (NGTP…TGLT), 79-99 (MAVG…DDFI), 107-127 (LGLK…YVAF), 146-166 (FVIN…VAIV), 178-198 (LASG…SSIA), 203-223 (VAVL…FNSY), 227-247 (VFMG…FSVL), 250-270 (SVLI…SVLI), and 302-322 (VVFI…IAVF).

It belongs to the glycosyltransferase 4 family. MraY subfamily. Requires Mg(2+) as cofactor.

Its subcellular location is the cell membrane. It carries out the reaction UDP-N-acetyl-alpha-D-muramoyl-L-alanyl-gamma-D-glutamyl-meso-2,6-diaminopimeloyl-D-alanyl-D-alanine + di-trans,octa-cis-undecaprenyl phosphate = di-trans,octa-cis-undecaprenyl diphospho-N-acetyl-alpha-D-muramoyl-L-alanyl-D-glutamyl-meso-2,6-diaminopimeloyl-D-alanyl-D-alanine + UMP. It participates in cell wall biogenesis; peptidoglycan biosynthesis. Functionally, catalyzes the initial step of the lipid cycle reactions in the biosynthesis of the cell wall peptidoglycan: transfers peptidoglycan precursor phospho-MurNAc-pentapeptide from UDP-MurNAc-pentapeptide onto the lipid carrier undecaprenyl phosphate, yielding undecaprenyl-pyrophosphoryl-MurNAc-pentapeptide, known as lipid I. This is Phospho-N-acetylmuramoyl-pentapeptide-transferase from Clostridioides difficile (strain 630) (Peptoclostridium difficile).